The chain runs to 238 residues: MKMKRSPYCFCCSFALLLLVSFLKDRHFCSADPTDGFTEVPLTEDNFVIQKPYDKPLNDRYSYKNGIRRLWVYENDKPFKVGSPTRPRTEIRIKGHDYSSGVWQFEGQVHVPEGTSGVTVMQVFGAVNKATALQLRVYNGDLKSYKSNSVATDIYNKWLRVNVIHKVGKGEITVFINGQQKLVVNDDGPAEHYFKCGVYAAPDGSSNYMESRWKNIKLYKSDNKLEGCNNNHGTWLVQ.

Positions 1 to 31 (MKMKRSPYCFCCSFALLLLVSFLKDRHFCSA) are cleaved as a signal peptide. Positions 225–238 (LEGCNNNHGTWLVQ) are cleaved as a propeptide — removed in mature form.

Its subcellular location is the vacuole. In terms of biological role, may be a subunit of a vacuolar malate and citrate transporter. The sequence is that of Citrate-binding protein (CBP) from Hevea brasiliensis (Para rubber tree).